The following is a 594-amino-acid chain: Ferredoxin--nitrite reductase, chloroplastic (594 aa).

The N-terminal 32 residues, 1 to 32, are a transit peptide targeting the chloroplast; that stretch reads MASLPVNKIIPSSTTLLSSSNNNRRRNNSSIR. Low complexity predominate over residues 13-22; the sequence is STTLLSSSNN. Residues 13–36 form a disordered region; that stretch reads STTLLSSSNNNRRRNNSSIRCQKA. Residues Cys-473, Cys-479, Cys-514, and Cys-518 each coordinate [4Fe-4S] cluster. Cys-518 is a siroheme binding site.

The protein belongs to the nitrite and sulfite reductase 4Fe-4S domain family. Monomer. Requires siroheme as cofactor. It depends on [4Fe-4S] cluster as a cofactor.

The protein localises to the plastid. Its subcellular location is the chloroplast. The catalysed reaction is 6 oxidized [2Fe-2S]-[ferredoxin] + NH4(+) + 2 H2O = nitrite + 6 reduced [2Fe-2S]-[ferredoxin] + 8 H(+). It functions in the pathway nitrogen metabolism; nitrate reduction (assimilation). The polypeptide is Ferredoxin--nitrite reductase, chloroplastic (NIR) (Spinacia oleracea (Spinach)).